Consider the following 182-residue polypeptide: Putative minor fimbrial subunit PmfF (182 aa).

The signal sequence occupies residues 1–22; it reads MKNSIIKSAITCLLLLSPSTFA.

The protein belongs to the fimbrial protein family.

Its subcellular location is the fimbrium. This Proteus mirabilis (strain HI4320) protein is Putative minor fimbrial subunit PmfF (pmfF).